Consider the following 457-residue polypeptide: Endo-1,3(4)-beta-glucanase ARB_04519 (457 aa).

The first 18 residues, 1 to 18, serve as a signal peptide directing secretion; that stretch reads MRTTGLLLLGALAELGSA. In terms of domain architecture, GH16 spans 19–319; sequence TYILEDDYQP…YMKVYQQGTA (301 aa). The Nucleophile role is filled by Glu130. The active-site Proton donor is Glu135. Residue Asn200 is glycosylated (N-linked (GlcNAc...) asparagine). Positions 318 to 397 are disordered; sequence TAPTKPSQAP…DSCPPPTQPA (80 aa). Positions 333–352 are enriched in low complexity; sequence TPALPTMKSTSTVSSMVSAT. Residues 353-362 are compositionally biased toward polar residues; it reads QPAPTASNPT. A compositionally biased stretch (low complexity) spans 368-378; that stretch reads PSSSSSNNGPQ.

Belongs to the glycosyl hydrolase 16 family.

Its subcellular location is the secreted. It carries out the reaction Endohydrolysis of (1-&gt;3)- or (1-&gt;4)-linkages in beta-D-glucans when the glucose residue whose reducing group is involved in the linkage to be hydrolyzed is itself substituted at C-3.. Functionally, mixed-linked glucanase involved in the degradation of complex natural cellulosic substrates. Active on laminarin. lichenan, soluble carboxymethyl cellulose but not on pustulan. The polypeptide is Endo-1,3(4)-beta-glucanase ARB_04519 (Arthroderma benhamiae (strain ATCC MYA-4681 / CBS 112371) (Trichophyton mentagrophytes)).